We begin with the raw amino-acid sequence, 264 residues long: Indole-3-glycerol phosphate synthase (264 aa).

It belongs to the TrpC family.

It catalyses the reaction 1-(2-carboxyphenylamino)-1-deoxy-D-ribulose 5-phosphate + H(+) = (1S,2R)-1-C-(indol-3-yl)glycerol 3-phosphate + CO2 + H2O. It functions in the pathway amino-acid biosynthesis; L-tryptophan biosynthesis; L-tryptophan from chorismate: step 4/5. The chain is Indole-3-glycerol phosphate synthase from Stenotrophomonas maltophilia (strain R551-3).